Reading from the N-terminus, the 119-residue chain is Probable non-functional T cell receptor gamma variable 10 (119 aa).

An N-terminal signal peptide occupies residues 1 to 19; sequence MSLLEAFAFSSWALGLGLS. The 96-residue stretch at 24–119 folds into the Ig-like domain; that stretch reads FQLSISTEVK…MAVYYCAAWD (96 aa). Cys40 and Cys115 form a disulfide bridge.

In terms of assembly, gamma-delta TR is a heterodimer composed of a gamma and delta chain; disulfide-linked. The gamma-delta TR is associated with the transmembrane signaling CD3 coreceptor proteins following the stoichiometry: a single gamma-delta TR heterodimer associates with one CD3D-CD3E heterodimer, one CD3G-CD3E heterodimer and one CD247 homodimer forming a stable octameric structure. Upon activation, gamma-delta TR complex associates with FCER1G to initiate intracellular signaling.

The protein resides in the cell membrane. Functionally, probable non-functional open reading frame (ORF) of V region of the variable domain of T cell receptor (TR) gamma chain. Non-functional ORF generally cannot participate in the synthesis of a productive T cell receptor (TR) chain due to altered V-(D)-J or switch recombination and/or splicing site (at mRNA level) and/or conserved amino acid change (protein level). Gamma-delta TRs recognize a variety of self and foreign non-peptide antigens frequently expressed at the epithelial boundaries between the host and external environment, including endogenous lipids presented by MH-like protein CD1D and phosphoantigens presented by butyrophilin-like molecule BTN3A1. Upon antigen recognition induces rapid, innate-like immune responses involved in pathogen clearance and tissue repair. Binding of gamma-delta TR complex to antigen triggers phosphorylation of immunoreceptor tyrosine-based activation motifs (ITAMs) in the CD3 chains by the LCK and FYN kinases, allowing the recruitment, phosphorylation, and activation of ZAP70 that facilitates phosphorylation of the scaffolding proteins LCP2 and LAT. This lead to the formation of a supramolecular signalosome that recruits the phospholipase PLCG1, resulting in calcium mobilization and ERK activation, ultimately leading to T cell expansion and differentiation into effector cells. Gamma-delta TRs are produced through somatic rearrangement of a limited repertoire of variable (V), diversity (D), and joining (J) genes. The potential diversity of gamma-delta TRs is conferred by the unique ability to rearrange (D) genes in tandem and to utilize all three reading frames. The combinatorial diversity is considerably increased by the sequence exonuclease trimming and random nucleotide (N) region additions which occur during the V-(D)-J rearrangements. The polypeptide is Probable non-functional T cell receptor gamma variable 10 (Homo sapiens (Human)).